Reading from the N-terminus, the 190-residue chain is Glutathione peroxidase 2 (190 aa).

Sec40 is an active-site residue. Position 40 (Sec40) is a non-standard amino acid, selenocysteine.

This sequence belongs to the glutathione peroxidase family. As to quaternary structure, homotetramer. Mucosal epithelium of the gastrointestinal tract.

The protein resides in the cytoplasm. It is found in the cytosol. It carries out the reaction 2 glutathione + H2O2 = glutathione disulfide + 2 H2O. It catalyses the reaction a hydroperoxy polyunsaturated fatty acid + 2 glutathione = a hydroxy polyunsaturated fatty acid + glutathione disulfide + H2O. The catalysed reaction is tert-butyl hydroperoxide + 2 glutathione = tert-butanol + glutathione disulfide + H2O. The enzyme catalyses cumene hydroperoxide + 2 glutathione = 2-phenylpropan-2-ol + glutathione disulfide + H2O. It carries out the reaction (13S)-hydroperoxy-(9Z,11E)-octadecadienoate + 2 glutathione = (13S)-hydroxy-(9Z,11E)-octadecadienoate + glutathione disulfide + H2O. It catalyses the reaction (5S)-hydroperoxy-(6E,8Z,11Z,14Z)-eicosatetraenoate + 2 glutathione = (5S)-hydroxy-(6E,8Z,11Z,14Z)-eicosatetraenoate + glutathione disulfide + H2O. The catalysed reaction is (12R)-hydroperoxy-(5Z,8Z,10E,14Z)-eicosatetraenoate + 2 glutathione = (12R)-hydroxy-(5Z,8Z,10E,14Z)-eicosatetraenoate + glutathione disulfide + H2O. The enzyme catalyses (15S)-hydroperoxy-(5Z,8Z,11Z,13E)-eicosatetraenoate + 2 glutathione = (15S)-hydroxy-(5Z,8Z,11Z,13E)-eicosatetraenoate + glutathione disulfide + H2O. Functionally, catalyzes the reduction of hydroperoxides in a glutathione-dependent manner thus regulating cellular redox homeostasis. Can reduce small soluble hydroperoxide such as H2O2. Can reduce cumene hydroperoxide and tert-butyl hydroperoxide, as well as several fatty acid-derived hydroperoxides. Cannot reduce phosphatidycholine hydroperoxide. This Rattus norvegicus (Rat) protein is Glutathione peroxidase 2 (Gpx2).